The chain runs to 265 residues: Protein Rv2993c (265 aa).

The a divalent metal cation site is built by Glu-114, Glu-116, and Asp-145.

This sequence in the C-terminal section; belongs to the FAH family. The cofactor is a divalent metal cation.

The sequence is that of Protein Rv2993c from Mycobacterium tuberculosis (strain ATCC 25618 / H37Rv).